The following is an 81-amino-acid chain: Protein Vpu (81 aa).

Topologically, residues 1-7 (MSYLLAI) are extracellular. The chain crosses the membrane as a helical span at residues 8–28 (GIAALIVALIIAIVVWTIVYI). Residues 29 to 81 (EYKKLVRQRKINKLYKRIRERAEDSGNESEGDAEELAALGEMGPFIPGDINNL) lie on the Cytoplasmic side of the membrane. A phosphoserine; by host CK2 mark is found at Ser53 and Ser57.

This sequence belongs to the HIV-1 VPU protein family. Homopentamer. Interacts with host CD4 and BRTC; these interactions induce proteasomal degradation of CD4. Interacts with host BST2; this interaction leads to the degradation of host BST2. Interacts with host FBXW11. Interacts with host AP1M1; this interaction plays a role in the mistrafficking and subsequent degradation of host BST2. Interacts with host RANBP2; this interaction allows Vpu to down-regulate host BLM sumoylation. Phosphorylated by host CK2. This phosphorylation is necessary for interaction with human BTRC and degradation of CD4.

The protein localises to the host membrane. Its activity is regulated as follows. Ion channel activity is inhibited by hexamethylene amiloride in vitro. In terms of biological role, enhances virion budding by targeting host CD4 and Tetherin/BST2 to proteasome degradation. Degradation of CD4 prevents any unwanted premature interactions between viral Env and its host receptor CD4 in the endoplasmic reticulum. Degradation of antiretroviral protein Tetherin/BST2 is important for virion budding, as BST2 tethers new viral particles to the host cell membrane. Mechanistically, Vpu bridges either CD4 or BST2 to BTRC, a substrate recognition subunit of the Skp1/Cullin/F-box protein E3 ubiquitin ligase, induces their ubiquitination and subsequent proteasomal degradation. The alteration of the E3 ligase specificity by Vpu seems to promote the degradation of host IKBKB, leading to NF-kappa-B down-regulation and subsequent apoptosis. Acts as a viroporin that forms an oligomeric ion channel in membranes. Modulates the host DNA repair mechanisms to promote degradation of nuclear viral cDNA in cells that are already productively infected in order to suppress immune sensing and proviral hyper-integration (superinfection). Manipulates PML-NBs and modulates SUMOylation of host BLM protein thereby enhancing its DNA-end processing activity toward viral unintegrated linear DNA. Also inhibits RAD52-mediated homologous repair of viral cDNA, preventing the generation of dead-end circular forms of single copies of the long terminal repeat and permitting sustained nucleolytic attack. This chain is Protein Vpu, found in Homo sapiens (Human).